The chain runs to 347 residues: NADH-ubiquinone oxidoreductase chain 2 (347 aa).

10 helical membrane-spanning segments follow: residues 13-33 (VILGTLIVMMSSHWLLIWIGF), 59-79 (YFFTQATASMLLMLAVLLNLM), 96-116 (MIMTMALTMKLGLAPFHFWVP), 122-142 (IPLSSGLILLTWQKLAPLTVL), 149-169 (INLTMLLTMSIASIAIGGWGG), 178-198 (IMAYSSIAHMGWMTTILIYNP), 200-220 (MTLLNLVIYILMTTTMFMLFM), 240-260 (IVTITLATLLSLGGLPPLTGF), 276-296 (IILPTIMAITALLNLFFYMRL), and 325-345 (LLTPMIVLSTLTLPPTPMIII).

This sequence belongs to the complex I subunit 2 family. In terms of assembly, core subunit of respiratory chain NADH dehydrogenase (Complex I) which is composed of 45 different subunits. Interacts with TMEM242.

It localises to the mitochondrion inner membrane. It carries out the reaction a ubiquinone + NADH + 5 H(+)(in) = a ubiquinol + NAD(+) + 4 H(+)(out). Its function is as follows. Core subunit of the mitochondrial membrane respiratory chain NADH dehydrogenase (Complex I) which catalyzes electron transfer from NADH through the respiratory chain, using ubiquinone as an electron acceptor. Essential for the catalytic activity and assembly of complex I. In Molossus ater (Black mastiff bat), this protein is NADH-ubiquinone oxidoreductase chain 2.